The following is a 100-amino-acid chain: Class II hydrophobin FOXG_02746 (100 aa).

The first 17 residues, 1–17 (MQFYTIVSLFLAGTAYA), serve as a signal peptide directing secretion. 4 disulfide bridges follow: cysteine 29-cysteine 79, cysteine 40-cysteine 70, cysteine 41-cysteine 53, and cysteine 80-cysteine 92.

Belongs to the cerato-ulmin hydrophobin family. As to quaternary structure, homodimer. Homodimers further self-assemble to form highly ordered films at water-air interfaces through intermolecular interactions.

It localises to the secreted. It is found in the cell wall. Its function is as follows. Aerial growth, conidiation, and dispersal of filamentous fungi in the environment rely upon a capability of their secreting small amphipathic proteins called hydrophobins (HPBs) with low sequence identity. Class I can self-assemble into an outermost layer of rodlet bundles on aerial cell surfaces, conferring cellular hydrophobicity that supports fungal growth, development and dispersal; whereas Class II form highly ordered films at water-air interfaces through intermolecular interactions but contribute nothing to the rodlet structure. FOXG_02746 is a class II hydrophobin that is likely required for plant colonization. This is Class II hydrophobin FOXG_02746 from Fusarium oxysporum f. sp. lycopersici (strain 4287 / CBS 123668 / FGSC 9935 / NRRL 34936) (Fusarium vascular wilt of tomato).